The primary structure comprises 1026 residues: Probable DNA-directed RNA polymerase II subunit RPB1 homolog (1026 aa).

Zn(2+) is bound by residues Cys62, Cys65, Cys72, His75, Cys102, Cys105, and Cys142. Residues Asp588, Asp590, and Asp592 each contribute to the Mg(2+) site.

This sequence belongs to the RNA polymerase beta' chain family.

It catalyses the reaction RNA(n) + a ribonucleoside 5'-triphosphate = RNA(n+1) + diphosphate. Component of the DNA-dependent RNA polymerase that catalyzes the transcription of DNA into RNA using the four ribonucleoside triphosphates as substrates. Largest and catalytic component of RNA polymerase II which synthesizes mRNA precursors and many functional non-coding RNAs. Forms the polymerase active center together with the second largest subunit. This is Probable DNA-directed RNA polymerase II subunit RPB1 homolog from Acheta domesticus (House cricket).